The primary structure comprises 249 residues: Segregation and condensation protein A (249 aa).

Belongs to the ScpA family. As to quaternary structure, component of a cohesin-like complex composed of ScpA, ScpB and the Smc homodimer, in which ScpA and ScpB bind to the head domain of Smc. The presence of the three proteins is required for the association of the complex with DNA.

It is found in the cytoplasm. Its function is as follows. Participates in chromosomal partition during cell division. May act via the formation of a condensin-like complex containing Smc and ScpB that pull DNA away from mid-cell into both cell halves. The protein is Segregation and condensation protein A of Listeria monocytogenes serotype 4b (strain CLIP80459).